The primary structure comprises 205 residues: UPF0111 protein YkaA (205 aa).

This sequence belongs to the UPF0111 family.

This is UPF0111 protein YkaA (ykaA) from Bacillus subtilis (strain 168).